A 222-amino-acid chain; its full sequence is GTP cyclohydrolase 1 (222 aa).

Zn(2+) contacts are provided by Cys-111, His-114, and Cys-182.

It belongs to the GTP cyclohydrolase I family. In terms of assembly, toroid-shaped homodecamer, composed of two pentamers of five dimers.

It catalyses the reaction GTP + H2O = 7,8-dihydroneopterin 3'-triphosphate + formate + H(+). It participates in cofactor biosynthesis; 7,8-dihydroneopterin triphosphate biosynthesis; 7,8-dihydroneopterin triphosphate from GTP: step 1/1. The sequence is that of GTP cyclohydrolase 1 from Enterobacter sp. (strain 638).